Consider the following 472-residue polypeptide: UDP-N-acetylmuramate--L-alanine ligase (472 aa).

123-129 contributes to the ATP binding site; it reads GSHGKTT.

Belongs to the MurCDEF family.

It is found in the cytoplasm. It catalyses the reaction UDP-N-acetyl-alpha-D-muramate + L-alanine + ATP = UDP-N-acetyl-alpha-D-muramoyl-L-alanine + ADP + phosphate + H(+). Its pathway is cell wall biogenesis; peptidoglycan biosynthesis. Cell wall formation. The protein is UDP-N-acetylmuramate--L-alanine ligase of Solibacter usitatus (strain Ellin6076).